A 625-amino-acid chain; its full sequence is tRNA uridine 5-carboxymethylaminomethyl modification enzyme MnmG (625 aa).

FAD contacts are provided by residues 13-18 (GGGHAG), Val125, and Ser182. 276–290 (GPRYCPSIEDKITRF) lines the NAD(+) pocket. FAD is bound at residue Gln373.

It belongs to the MnmG family. In terms of assembly, homodimer. Heterotetramer of two MnmE and two MnmG subunits. Requires FAD as cofactor.

The protein resides in the cytoplasm. Functionally, NAD-binding protein involved in the addition of a carboxymethylaminomethyl (cmnm) group at the wobble position (U34) of certain tRNAs, forming tRNA-cmnm(5)s(2)U34. In Lactococcus lactis subsp. lactis (strain IL1403) (Streptococcus lactis), this protein is tRNA uridine 5-carboxymethylaminomethyl modification enzyme MnmG.